The primary structure comprises 131 residues: D-ribose pyranase (131 aa).

Histidine 20 (proton donor) is an active-site residue. Substrate-binding positions include aspartate 28, histidine 98, and 120–122 (YSN).

The protein belongs to the RbsD / FucU family. RbsD subfamily. As to quaternary structure, homodecamer.

Its subcellular location is the cytoplasm. It catalyses the reaction beta-D-ribopyranose = beta-D-ribofuranose. It participates in carbohydrate metabolism; D-ribose degradation; D-ribose 5-phosphate from beta-D-ribopyranose: step 1/2. Catalyzes the interconversion of beta-pyran and beta-furan forms of D-ribose. This Latilactobacillus sakei subsp. sakei (strain 23K) (Lactobacillus sakei subsp. sakei) protein is D-ribose pyranase.